Reading from the N-terminus, the 215-residue chain is Thymidylate kinase (215 aa).

12 to 19 (GIDGAGKS) provides a ligand contact to ATP.

This sequence belongs to the thymidylate kinase family.

It catalyses the reaction dTMP + ATP = dTDP + ADP. In terms of biological role, phosphorylation of dTMP to form dTDP in both de novo and salvage pathways of dTTP synthesis. The protein is Thymidylate kinase of Albidiferax ferrireducens (strain ATCC BAA-621 / DSM 15236 / T118) (Rhodoferax ferrireducens).